The following is a 346-amino-acid chain: Dimethyladenosine transferase 1, mitochondrial (346 aa).

The transit peptide at 1–27 directs the protein to the mitochondrion; it reads MATQGVLAKYRLPPLPTIGEIIKLFNL. S-adenosyl-L-methionine contacts are provided by Asn36, Leu38, Gly63, Glu85, Lys86, Asp111, Ile112, and Asn141.

This sequence belongs to the class I-like SAM-binding methyltransferase superfamily. rRNA adenine N(6)-methyltransferase family. KsgA subfamily.

Its subcellular location is the mitochondrion. It catalyses the reaction adenosine(N)/adenosine(N+1) in rRNA + 4 S-adenosyl-L-methionine = N(6)-dimethyladenosine(N)/N(6)-dimethyladenosine(N+1) in rRNA + 4 S-adenosyl-L-homocysteine + 4 H(+). Mitochondrial methyltransferase which uses S-adenosyl methionine to dimethylate two highly conserved adjacent adenosine residues (A1583 and A1584) within the loop of helix 45 at the 3-prime end of 12S rRNA, thereby regulating the assembly or stability of the small subunit of the mitochondrial ribosome. Also required for basal transcription of mitochondrial DNA, probably via its interaction with POLRMT and TFAM. Stimulates transcription independently of the methyltransferase activity. The polypeptide is Dimethyladenosine transferase 1, mitochondrial (tfb1m) (Xenopus tropicalis (Western clawed frog)).